We begin with the raw amino-acid sequence, 286 residues long: L-cysteine S-thiosulfotransferase subunit SoxA (286 aa).

The first 27 residues, 1–27 (MKKTIQRGLFTGALVLMTAMTAKPANA), serve as a signal peptide directing secretion. Cysteine 106 and cysteine 137 are oxidised to a cystine. In terms of domain architecture, Cytochrome c spans 180-286 (DAYMKGKKFF…LKYNGPASRK (107 aa)). Positions 200 and 204 each coordinate heme. Residue arginine 243 participates in substrate binding. Cysteine 247 serves as a coordination point for heme. Catalysis depends on cysteine 247, which acts as the Cysteine persulfide intermediate.

This sequence belongs to the SoxA family. As to quaternary structure, heterodimer of SoxA and SoxX. The SoxAX complex interacts with CT1020, SoxAX-binding protein SaxB (SoxK); this interaction seems to be between SoxA and CT1020 and stimulates catalytic activity of the SoxAX complex. Heme serves as cofactor. Post-translationally, cysteine persulfide at Cys-247.

Its subcellular location is the periplasm. It carries out the reaction L-cysteinyl-[SoxY protein] + thiosulfate + 2 Fe(III)-[cytochrome c] = S-sulfosulfanyl-L-cysteinyl-[SoxY protein] + 2 Fe(II)-[cytochrome c] + 2 H(+). The enzyme catalyses S-sulfanyl-L-cysteinyl-[SoxY protein] + thiosulfate + 2 Fe(III)-[cytochrome c] = S-(2-sulfodisulfanyl)-L-cysteinyl-[SoxY protein] + 2 Fe(II)-[cytochrome c] + 2 H(+). Functionally, C-type monoheme cytochrome, which is part of the SoxAX cytochrome complex involved in sulfur oxidation. The SoxAX complex catalyzes the formation of a heterodisulfide bond between the conserved cysteine residue on a sulfur carrier SoxYZ complex subunit SoxY and thiosulfate or other inorganic sulfur substrates. This leads to the liberation of two electrons, which may be transferred from the SoxAX complex to another cytochrome c and which then may be used for reductive CO(2) fixation. The polypeptide is L-cysteine S-thiosulfotransferase subunit SoxA (Chlorobaculum tepidum (strain ATCC 49652 / DSM 12025 / NBRC 103806 / TLS) (Chlorobium tepidum)).